A 171-amino-acid chain; its full sequence is Co-chaperone protein HscB (171 aa).

One can recognise a J domain in the interval 2–74 (DYFTLFGLPA…LTRAEYLLSL (73 aa)).

This sequence belongs to the HscB family. As to quaternary structure, interacts with HscA and stimulates its ATPase activity. Interacts with IscU.

Functionally, co-chaperone involved in the maturation of iron-sulfur cluster-containing proteins. Seems to help targeting proteins to be folded toward HscA. The protein is Co-chaperone protein HscB of Salmonella schwarzengrund (strain CVM19633).